The chain runs to 126 residues: Holo-[acyl-carrier-protein] synthase (126 aa).

Aspartate 9 and glutamate 58 together coordinate Mg(2+).

This sequence belongs to the P-Pant transferase superfamily. AcpS family. Mg(2+) serves as cofactor.

It localises to the cytoplasm. It carries out the reaction apo-[ACP] + CoA = holo-[ACP] + adenosine 3',5'-bisphosphate + H(+). Functionally, transfers the 4'-phosphopantetheine moiety from coenzyme A to a Ser of acyl-carrier-protein. This is Holo-[acyl-carrier-protein] synthase from Vibrio vulnificus (strain YJ016).